The following is a 66-amino-acid chain: MRITEMRELTDEELNQELNNLKEKLFQLRFQLELGQLKNSSSIKQVKKDIARIKTILKERELGIRR.

This sequence belongs to the universal ribosomal protein uL29 family.

The chain is Large ribosomal subunit protein uL29 from Petrotoga mobilis (strain DSM 10674 / SJ95).